We begin with the raw amino-acid sequence, 711 residues long: Zinc finger CCCH domain-containing protein 32 (711 aa).

The segment covering 1-21 (MEADGAAAAAAAGEASTEAGA) has biased composition (low complexity). A disordered region spans residues 1 to 23 (MEADGAAAAAAAGEASTEAGARP). 3 C3H1-type zinc fingers span residues 31-60 (LRRN…HSDN), 62-88 (RMNP…HPPI), and 112-139 (GKQL…HGPQ). 4 disordered regions span residues 221-246 (KSEK…GDHP), 339-376 (RFNG…HSER), 405-561 (SSLA…EGPK), and 573-701 (AAWA…DDDD). Composition is skewed to basic and acidic residues over residues 364-376 (SERS…HSER) and 413-427 (RNGE…YRER). The segment covering 428–437 (AHGHRSHRDH) has biased composition (basic residues). Basic and acidic residues-rich tracts occupy residues 460–509 (SPDR…RRSS) and 585–594 (KQDKSAEVSH). Acidic residues-rich tracts occupy residues 648–663 (EDII…DADN) and 686–701 (ENAY…DDDD).

The protein is Zinc finger CCCH domain-containing protein 32 of Oryza sativa subsp. japonica (Rice).